Here is a 206-residue protein sequence, read N- to C-terminus: CMP-5'-(N-acetyl-N-hydroxy-3-aminopropyl)phosphonate hydrolase (206 aa).

The region spanning 37-166 is the Nudix hydrolase domain; the sequence is VRAPGAAIIV…RTVTSGTAIG (130 aa). The Nudix box motif lies at 74-95; that stretch reads GLVDDREDPAVTAAREAEEETG. Over residues 177 to 194 the composition is skewed to low complexity; sequence RQQPGGVQEQPGGAQQQG. The disordered stretch occupies residues 177-206; sequence RQQPGGVQEQPGGAQQQGMNESHSGRTVRG.

The protein belongs to the Nudix hydrolase family. Mg(2+) serves as cofactor.

It carries out the reaction CMP-5'-(N-acetyl-N-hydroxy-3-aminopropyl)phosphonate + H2O = 3-(N-acetyl-N-hydroxy)aminopropylphosphonate + CMP + H(+). It participates in antibiotic biosynthesis. Functionally, nucleotide hydrolase involved in the biosynthesis of the phosphonate antibiotic FR-900098, a potent antimalarial agent that acts as an inhibitor of 1-deoxy-D-xylulose 5-phosphate reductoisomerase (DXR), the first enzyme in the nonmevalonate pathway for isoprenoid biosynthesis. Catalyzes the hydrolysis of CMP-5'-(N-acetyl-N-hydroxy-3-aminopropyl)phosphonate (CMP-5'-FR-900098) to produce CMP and the final compound FR-900098. In vitro, has broad substrate specificity and also catalyzes the hydrolysis of all the other CMP-containing intermediates within the pathway and shows low activity toward CTP. In Streptomyces rubellomurinus (strain ATCC 31215), this protein is CMP-5'-(N-acetyl-N-hydroxy-3-aminopropyl)phosphonate hydrolase.